Reading from the N-terminus, the 440-residue chain is ATP-dependent protease ATPase subunit HslU (440 aa).

Residues valine 18, 60-65, aspartate 254, glutamate 319, and arginine 391 contribute to the ATP site; that span reads GVGKTE.

Belongs to the ClpX chaperone family. HslU subfamily. As to quaternary structure, a double ring-shaped homohexamer of HslV is capped on each side by a ring-shaped HslU homohexamer. The assembly of the HslU/HslV complex is dependent on binding of ATP.

It localises to the cytoplasm. Functionally, ATPase subunit of a proteasome-like degradation complex; this subunit has chaperone activity. The binding of ATP and its subsequent hydrolysis by HslU are essential for unfolding of protein substrates subsequently hydrolyzed by HslV. HslU recognizes the N-terminal part of its protein substrates and unfolds these before they are guided to HslV for hydrolysis. The protein is ATP-dependent protease ATPase subunit HslU of Cellvibrio japonicus (strain Ueda107) (Pseudomonas fluorescens subsp. cellulosa).